The following is a 519-amino-acid chain: MAPIPKTVGRIKLDCSLRPSCPLEVAAAPKLCKEFGPEDYGEEDIVDFLRRLVESDPQGLHRIHVDGSSGRLQLWHHDYLLGHLDDEGKSTGQSDRGKGAEGLGTYCGLRKSFLYPPQESEPCPQSPSASATFPSVSDSLLQVAMPQKLLVTEEEANRLAEELVAEEERMKQKAEKKRLKKKRQKERKRQERLEQYCGEPKASTTSDGDESPPSSPGNPVQGQCGEEEDSLDLSSTFVSLALRKVGDWPLSARREKGLNQEPQGRGLALQKMGQEEESPPREERPQQSPKVQASPGLLAAALQQSQELAKLGTSFAQNGFYHEAVVLFTQALKLNPQDHRLFGNRSFCHERLGQPAWALADAQVALTLRPGWPRGLFRLGKALMGLQRFREAAAVFQETLRGGSQPDAARELRSCLLHLTLQGQRGGICAPPLSPGALQPLPHAELAPSGLPSLRCPRSTALRSPGLSPLLHYPSCHRSHPNQPLSQTQSRRPHPLKPQDPSKGWDILGLGLQHLSQAR.

A coiled-coil region spans residues 147–197 (QKLLVTEEEANRLAEELVAEEERMKQKAEKKRLKKKRQKERKRQERLEQYC). Positions 175 to 187 (EKKRLKKKRQKER) are enriched in basic residues. Disordered regions lie at residues 175 to 230 (EKKR…EEDS) and 253 to 294 (RREK…VQAS). Ser278 bears the Phosphoserine mark. TPR repeat units follow at residues 305–338 (SQEL…NPQD), 339–372 (HRLF…RPGW), and 373–406 (PRGL…GSQP). The interval 474 to 506 (PSCHRSHPNQPLSQTQSRRPHPLKPQDPSKGWD) is disordered. Polar residues predominate over residues 481–490 (PNQPLSQTQS).

The chain is Tetratricopeptide repeat protein 31 (TTC31) from Homo sapiens (Human).